The sequence spans 390 residues: Nucleosome assembly protein 1-like 1 (390 aa).

The segment covering 1–10 has biased composition (basic and acidic residues); it reads MADIDNKEQS. A disordered region spans residues 1–32; sequence MADIDNKEQSELDQDLEDVEEVEEEETGEETK. At Ala2 the chain carries N-acetylalanine. Ser10 is modified (phosphoserine). Residues 11 to 28 show a composition bias toward acidic residues; sequence ELDQDLEDVEEVEEEETG. Phosphothreonine occurs at positions 62 and 64. At Ser69 the chain carries Phosphoserine. Residue Lys116 is modified to N6-acetyllysine. The NAP1L motif signature appears at 125 to 150; that stretch reads YEPTEEECEWKPDEEDEVSEELKEKA. Residues 131 to 143 are compositionally biased toward acidic residues; the sequence is ECEWKPDEEDEVS. Residues 131 to 163 form a disordered region; that stretch reads ECEWKPDEEDEVSEELKEKAKIEDEKKDEEKED. Ser143 bears the Phosphoserine mark. Positions 144 to 163 are enriched in basic and acidic residues; the sequence is EELKEKAKIEDEKKDEEKED. The short motif at 272–278 is the Nuclear localization signal element; that stretch reads IKKKQKH. The segment covering 345–375 has biased composition (acidic residues); it reads AIEDDDDDYDEEGEEADEEGEEEGDEENDPD. Positions 345–390 are disordered; sequence AIEDDDDDYDEEGEEADEEGEEEGDEENDPDYDPKKDQNPAECKQQ. 5-glutamyl polyglycine is present on residues Glu358 and Glu359. A compositionally biased stretch (basic and acidic residues) spans 376 to 390; sequence YDPKKDQNPAECKQQ. A Cysteine methyl ester modification is found at Cys387. Cys387 carries S-farnesyl cysteine lipidation. The propeptide at 388–390 is removed in mature form; sequence KQQ.

It belongs to the nucleosome assembly protein (NAP) family. In terms of assembly, homodimer. The dimer binds strongly and sequentially to single and double H2A-H2B heterodimers. Interacts with ERCC6; this interaction increases ERCC6 processivity. Interacts with RAD54. Interacts with SETD1A. Post-translationally, polyglycylated by TTLL10 on glutamate residues, resulting in polyglycine chains on the gamma-carboxyl group. Both polyglutamylation and polyglycylation modifications can coexist on the same protein on adjacent residues, and lowering polyglycylation levels increases polyglutamylation, and reciprocally. In terms of processing, polyglutamylated by TTLL4 on glutamate residues, resulting in polyglutamate chains on the gamma-carboxyl group. Both polyglutamylation and polyglycylation modifications can coexist on the same protein on adjacent residues, and lowering polyglycylation levels increases polyglutamylation, and reciprocally.

It localises to the nucleus. It is found in the melanosome. The protein resides in the cytoplasm. Functionally, histone chaperone that plays a role in the nuclear import of H2A-H2B and nucleosome assembly. Also participates in several important DNA repair mechanisms: greatly enhances ERCC6-mediated chromatin remodeling which is essential for transcription-coupled nucleotide excision DNA repair. Also stimulates homologous recombination (HR) by RAD51 and RAD54 which is essential in mitotic DNA double strand break (DSB) repair. Plays a key role in the regulation of embryonic neurogenesis. Promotes the proliferation of neural progenitors and inhibits neuronal differentiation during cortical development. Regulates neurogenesis via the modulation of RASSF10; regulates RASSF10 expression by promoting SETD1A-mediated H3K4 methylation at the RASSF10 promoter. The polypeptide is Nucleosome assembly protein 1-like 1 (Nap1l1) (Rattus norvegicus (Rat)).